Reading from the N-terminus, the 246-residue chain is Complement C1q subcomponent subunit C (246 aa).

The N-terminal stretch at 1–29 is a signal peptide; the sequence is MVVGPSCQPPCGLCLLLLFLLALPLRSQA. In terms of domain architecture, Collagen-like spans 32–113; sequence GCYGIPGMPG…GPPGEPGVEG (82 aa). 4-hydroxyproline occurs at positions 37, 40, 43, 46, and 64. A disordered region spans residues 44-116; sequence GAPGKDGHDG…GEPGVEGRYK (73 aa). Residue Lys76 is modified to 5-hydroxylysine. The O-linked (Gal...) hydroxylysine glycan is linked to Lys76. A 4-hydroxyproline mark is found at Pro82, Pro97, Pro100, and Pro106. Pro residues predominate over residues 99 to 108; that stretch reads DPGPRGPPGE. Positions 116–246 constitute a C1q domain; that stretch reads KQKHQSVFTV…VFSGFLLFPD (131 aa). Cysteines 180 and 194 form a disulfide.

Core component of the complement C1 complex, a calcium-dependent complex composed of 1 molecule of the C1Q subcomplex, 2 molecules of C1R and 2 molecules of C1S. The C1Q subcomplex is composed 18 subunits: 3 chains of C1QA, C1QB, and C1QC trimerize to form 6 collagen-like triple helices connected to six globular ligand-recognition modules (C1q domain). In terms of processing, O-linked glycans consist of Glc-Gal disaccharides bound to the oxygen atom of post-translationally added hydroxyl groups.

It is found in the secreted. It localises to the cell surface. The C1Q subcomplex is inhibited by sulfated molecules, such as triterpenoid sulfates, heparan sulfate, or chondroitin sulfates. Functionally, core component of the complement C1 complex, a multiprotein complex that initiates the classical pathway of the complement system, a cascade of proteins that leads to phagocytosis and breakdown of pathogens and signaling that strengthens the adaptive immune system. The classical complement pathway is initiated by the C1Q subcomplex of the C1 complex, which specifically binds IgG or IgM immunoglobulins complexed with antigens, forming antigen-antibody complexes on the surface of pathogens: C1QA, together with C1QB and C1QC, specifically recognizes and binds the Fc regions of IgG or IgM via its C1q domain. Immunoglobulin-binding activates the proenzyme C1R, which cleaves C1S, initiating the proteolytic cascade of the complement system. The C1Q subcomplex is activated by a hexamer of IgG complexed with antigens, while it is activated by a pentameric IgM. The C1Q subcomplex also recognizes and binds phosphatidylserine exposed on the surface of cells undergoing programmed cell death, possibly promoting activation of the complement system. The chain is Complement C1q subcomponent subunit C from Mus musculus (Mouse).